Here is a 227-residue protein sequence, read N- to C-terminus: Transcriptional regulatory protein TdiR (227 aa).

One can recognise a Response regulatory domain in the interval 11 to 125; sequence TVFVVDDEAS…DLLDAVNAAL (115 aa). Asp60 is modified (4-aspartylphosphate). The HTH luxR-type domain occupies 141-206; it reads HLDLLATLSQ…DLMHFVMRGS (66 aa). A DNA-binding region (H-T-H motif) is located at residues 165 to 184; that stretch reads SKEIAKLLGISYKTVEAHRG.

Post-translationally, phosphorylated by TdiS.

Its function is as follows. Member of the two-component regulatory system TdiR/TdiS, which probably regulates transcription of toluene catabolic genes (bss operon). Binds to DNA. The sequence is that of Transcriptional regulatory protein TdiR (tdiR) from Thauera aromatica.